Consider the following 98-residue polypeptide: NADH-ubiquinone oxidoreductase chain 4L (98 aa).

Helical transmembrane passes span 1 to 21 (MSLAHINIFLAFTVSLVGLLM), 25 to 45 (HLMSSLLCLEGMMLSLFVMAT), and 59 to 81 (MPIILLVFAACERALGLSLLVMV).

It belongs to the complex I subunit 4L family. As to quaternary structure, core subunit of respiratory chain NADH dehydrogenase (Complex I) which is composed of 45 different subunits.

Its subcellular location is the mitochondrion inner membrane. It carries out the reaction a ubiquinone + NADH + 5 H(+)(in) = a ubiquinol + NAD(+) + 4 H(+)(out). Its function is as follows. Core subunit of the mitochondrial membrane respiratory chain NADH dehydrogenase (Complex I) which catalyzes electron transfer from NADH through the respiratory chain, using ubiquinone as an electron acceptor. Part of the enzyme membrane arm which is embedded in the lipid bilayer and involved in proton translocation. This Equus asinus (Donkey) protein is NADH-ubiquinone oxidoreductase chain 4L (MT-ND4L).